Here is an 88-residue protein sequence, read N- to C-terminus: Large ribosomal subunit protein bL27 (88 aa).

Positions 1-21 are disordered; that stretch reads MAHKKGASSSRNGRDSAAQRL.

This sequence belongs to the bacterial ribosomal protein bL27 family.

The protein is Large ribosomal subunit protein bL27 of Mycobacterium avium (strain 104).